The following is a 434-amino-acid chain: UDP-glucose 6-dehydrogenase (434 aa).

NAD(+) contacts are provided by residues 2–19 (NITF…GIIM), valine 11, aspartate 30, lysine 35, threonine 121, and glutamate 152. Residues 148-152 (EFLRE), lysine 204, asparagine 208, 249-253 (FLNAG), and glycine 257 contribute to the substrate site. The Nucleophile role is filled by cysteine 260. NAD(+) is bound at residue lysine 263. Lysine 321 is a binding site for substrate. Residue arginine 328 participates in NAD(+) binding.

This sequence belongs to the UDP-glucose/GDP-mannose dehydrogenase family.

The enzyme catalyses UDP-alpha-D-glucose + 2 NAD(+) + H2O = UDP-alpha-D-glucuronate + 2 NADH + 3 H(+). It functions in the pathway nucleotide-sugar biosynthesis; UDP-alpha-D-glucuronate biosynthesis; UDP-alpha-D-glucuronate from UDP-alpha-D-glucose: step 1/1. This Rickettsia prowazekii (strain Madrid E) protein is UDP-glucose 6-dehydrogenase (udg).